Here is a 320-residue protein sequence, read N- to C-terminus: rRNA methyltransferase 2, mitochondrial (320 aa).

The transit peptide at 1-18 (MILVYNRIRSIISSSLGR) directs the protein to the mitochondrion. Residues 83–86 (PGAW), Asp-104, 178–179 (DI), and Asp-203 each bind S-adenosyl-L-methionine. Lys-264 functions as the Proton acceptor in the catalytic mechanism.

The protein belongs to the class I-like SAM-binding methyltransferase superfamily. RNA methyltransferase RlmE family.

The protein resides in the mitochondrion. It carries out the reaction uridine(2791) in 21S rRNA + S-adenosyl-L-methionine = 2'-O-methyluridine(2791) in 21S rRNA + S-adenosyl-L-homocysteine + H(+). Its function is as follows. S-adenosyl-L-methionine-dependent 2'-O-ribose methyltransferase that catalyzes the formation of 2'-O-methyluridine at position 2791 (Um2791) in the 21S mitochondrial large subunit ribosomal RNA (mtLSU rRNA), a universally conserved modification in the peptidyl transferase domain of the mtLSU rRNA. This chain is rRNA methyltransferase 2, mitochondrial, found in Saccharomyces cerevisiae (strain ATCC 204508 / S288c) (Baker's yeast).